A 507-amino-acid chain; its full sequence is MEILVPGQATLAQLEAIWREGRRARLAPEARPAVEAAAARVAEAAAGTAPVYGVNTGFGKLASLKIAPADTAQLQRNLILSHCCGVGEPMPPSTARLMIALKLLSLGRGASGVRWEIVALLEGMLAAGVTPVIPAQGSVGASGDLAPLAHMAAVMIGEGEAEVGGRRLPGAAALAEAGLAPVALGPKEGLALINGTQFSTAYALAGLFEGWRAAQAALVISALSTDAIMGSTAPLRPEIHALRGHAGQIEAAATMRALLEGSAIRESHREGDQRVQDPYCIRCQPQVTGAAMDVLRMAAGTLATEANAATDNPLVLSDGRIVSGGNFHAEPVGFAADMIALALSEIGAIAQRRVALMVDPTLSFDLPPFLTPEPGLNSGLMIAEVTTAALMSENKHMAAPTVTDSTPTSANQEDHVSMAAHGARRLGRMVENLAVILGTEAICAAQGVEFRAPLATSAPLGAVLARLRAEVPRIAADRILAPDLAAAARLVRTGALARAAGLPFPAL.

Positions 141–143 (ASG) form a cross-link, 5-imidazolinone (Ala-Gly). At serine 142 the chain carries 2,3-didehydroalanine (Ser).

This sequence belongs to the PAL/histidase family. Contains an active site 4-methylidene-imidazol-5-one (MIO), which is formed autocatalytically by cyclization and dehydration of residues Ala-Ser-Gly.

The protein localises to the cytoplasm. It carries out the reaction L-histidine = trans-urocanate + NH4(+). Its pathway is amino-acid degradation; L-histidine degradation into L-glutamate; N-formimidoyl-L-glutamate from L-histidine: step 1/3. The polypeptide is Histidine ammonia-lyase (Cereibacter sphaeroides (strain ATCC 17023 / DSM 158 / JCM 6121 / CCUG 31486 / LMG 2827 / NBRC 12203 / NCIMB 8253 / ATH 2.4.1.) (Rhodobacter sphaeroides)).